The following is a 153-amino-acid chain: MADVSDAVDVGGAQPKKRTFRKFSYRGVDLDQLLDMGTDELVKLFHARARRRFQRGLKRKPMALIKKLRKAKRDAPPGEKPEPVRTHLRNMIIVPEMIGSIIGVYNGKTFNQVEIKPEMIGHYLAEFSISYKPVKHGRPGIGATHSSRFIPLK.

It belongs to the universal ribosomal protein uS19 family.

The chain is Small ribosomal subunit protein uS19 (RPS15) from Elaeis oleifera (American oil palm).